A 908-amino-acid chain; its full sequence is Low affinity vacuolar monovalent cation/H(+) antiporter (908 aa).

Over residues methionine 1–serine 15 the composition is skewed to polar residues. A disordered region spans residues methionine 1–leucine 20. The Cytoplasmic portion of the chain corresponds to methionine 1–tryptophan 244. Threonine 26 is subject to Phosphothreonine. Phosphoserine is present on serine 32. Residue threonine 33 is modified to Phosphothreonine. The tract at residues asparagine 68–arginine 147 is disordered. The span at serine 73–threonine 87 shows a compositional bias: low complexity. The segment covering glutamate 102–serine 121 has biased composition (polar residues). Serine 110 is modified (phosphoserine). Threonine 118 carries the post-translational modification Phosphothreonine. At serine 121 the chain carries Phosphoserine. The helical transmembrane segment at phenylalanine 245–leucine 265 threads the bilayer. Topologically, residues leucine 266–histidine 408 are vacuolar. The N-linked (GlcNAc...) asparagine glycan is linked to asparagine 361. Residues leucine 409–isoleucine 429 form a helical membrane-spanning segment. The Cytoplasmic segment spans residues proline 430–threonine 494. Residues asparagine 495–leucine 515 form a helical membrane-spanning segment. Over lysine 516–serine 530 the chain is Vacuolar. The chain crosses the membrane as a helical span at residues isoleucine 531 to alanine 551. Residues serine 552–glycine 560 lie on the Cytoplasmic side of the membrane. The helical transmembrane segment at valine 561–alanine 581 threads the bilayer. At leucine 582–glycine 587 the chain is on the vacuolar side. Residues leucine 588–leucine 608 form a helical membrane-spanning segment. The Cytoplasmic portion of the chain corresponds to serine 609–serine 626. A helical transmembrane segment spans residues alanine 627 to leucine 647. Residues tyrosine 648 to proline 686 lie on the Vacuolar side of the membrane. A helical transmembrane segment spans residues methionine 687–leucine 707. The Cytoplasmic portion of the chain corresponds to arginine 708–threonine 746. The helical transmembrane segment at cysteine 747–valine 767 threads the bilayer. The Vacuolar portion of the chain corresponds to aspartate 768 to glycine 783. The helical transmembrane segment at leucine 784–isoleucine 804 threads the bilayer. Topologically, residues histidine 805–serine 816 are cytoplasmic. Residues alanine 817–tyrosine 837 traverse the membrane as a helical segment. Topologically, residues threonine 838–glutamine 851 are vacuolar. The helical transmembrane segment at methionine 852–phenylalanine 872 threads the bilayer. The Cytoplasmic segment spans residues threonine 873–lysine 885. The helical transmembrane segment at glycine 886–leucine 906 threads the bilayer. Residues serine 907–glutamate 908 are Vacuolar-facing.

The protein belongs to the Ca(2+):cation antiporter (CaCA) (TC 2.A.19) family.

The protein resides in the vacuole membrane. Functionally, has a role in promoting intracellular monovalent cation sequestration via the exchange of monovalent cations and especially Na(+) for hydrogen ions across the vacuolar membrane. The protein is Low affinity vacuolar monovalent cation/H(+) antiporter (VNX1) of Saccharomyces cerevisiae (strain ATCC 204508 / S288c) (Baker's yeast).